Consider the following 259-residue polypeptide: Putative aldolase class 2 protein PA3430 (259 aa).

H113, H115, and H176 together coordinate Zn(2+).

Belongs to the aldolase class II family. Requires Zn(2+) as cofactor.

The sequence is that of Putative aldolase class 2 protein PA3430 from Pseudomonas aeruginosa (strain ATCC 15692 / DSM 22644 / CIP 104116 / JCM 14847 / LMG 12228 / 1C / PRS 101 / PAO1).